The sequence spans 257 residues: Exosome complex component Rrp4 (257 aa).

The S1 motif domain occupies 65–137; it reads GDNVLGKIVD…EVNQIDLTTK (73 aa). The 60-residue stretch at 147–206 folds into the KH domain; sequence RGGQLVTITPSKVPRLIGKGGSMINMIKTLTGTRIIVGQNGWVWVSGKNDELERLAIEAI.

It belongs to the RRP4 family. In terms of assembly, component of the archaeal exosome complex. Forms a trimer of Rrp4 and/or Csl4 subunits. The trimer associates with a hexameric ring-like arrangement composed of 3 Rrp41-Rrp42 heterodimers.

The protein resides in the cytoplasm. Non-catalytic component of the exosome, which is a complex involved in RNA degradation. Increases the RNA binding and the efficiency of RNA degradation. Confers strong poly(A) specificity to the exosome. This Thermococcus kodakarensis (strain ATCC BAA-918 / JCM 12380 / KOD1) (Pyrococcus kodakaraensis (strain KOD1)) protein is Exosome complex component Rrp4.